A 352-amino-acid chain; its full sequence is C-C chemokine receptor type 5 (352 aa).

Residues M1–A30 lie on the Extracellular side of the membrane. Y3 is modified (sulfotyrosine). Residues S6 and S7 are each glycosylated (O-linked (GalNAc...) serine). Y10, Y14, and Y15 each carry sulfotyrosine. Intrachain disulfides connect C20/C269 and C101/C178. A helical transmembrane segment spans residues R31 to C58. At K59 to Y68 the chain is on the cytoplasmic side. A helical membrane pass occupies residues L69–Y89. At A90–Q102 the chain is on the extracellular side. Residues L103–I124 form a helical membrane-spanning segment. The Cytoplasmic portion of the chain corresponds to D125 to T141. Residues V142 to F166 form a helical membrane-spanning segment. The Extracellular portion of the chain corresponds to T167–I198. Residues V199–L218 form a helical membrane-spanning segment. Over K219–R235 the chain is Cytoplasmic. A helical membrane pass occupies residues L236–F260. The Extracellular portion of the chain corresponds to Q261 to Q277. The helical transmembrane segment at A278–G301 threads the bilayer. Residues E302–L352 lie on the Cytoplasmic side of the membrane. Residues C321, C323, and C324 are each lipidated (S-palmitoyl cysteine). S336, S337, S342, and S349 each carry phosphoserine; by BARK1.

The protein belongs to the G-protein coupled receptor 1 family. In terms of assembly, interacts with PRAF2. Efficient ligand binding to CCL3/MIP-1alpha and CCL4/MIP-1beta requires sulfation, O-glycosylation and sialic acid modifications. Glycosylation on Ser-6 is required for efficient binding of CCL4. Interacts with GRK2. Interacts with ARRB1 and ARRB2. Interacts with CNIH4. Interacts with S100A4; this interaction stimulates T-lymphocyte chemotaxis. Post-translationally, sulfated on at least 2 of the N-terminal tyrosines. Sulfation is required for efficient binding of the chemokines, CCL3 and CCL4. Palmitoylation in the C-terminal is important for cell surface expression. In terms of processing, phosphorylation on serine residues in the C-terminal is stimulated by binding CC chemokines especially by APO-RANTES. Post-translationally, O-glycosylated, but not N-glycosylated. Ser-6 appears to be the major site even if Ser-7 may be also O-glycosylated. Also sialylated glycans present which contribute to chemokine binding. Thr-16 and Ser-17 may also be glycosylated and, if so, with small moieties such as a T-antigen.

It localises to the cell membrane. In terms of biological role, receptor for a number of inflammatory CC-chemokines including CCL3/MIP-1-alpha, CCL4/MIP-1-beta and RANTES and subsequently transduces a signal by increasing the intracellular calcium ion level. May play a role in the control of granulocytic lineage proliferation or differentiation. Participates in T-lymphocyte migration to the infection site by acting as a chemotactic receptor. This is C-C chemokine receptor type 5 (CCR5) from Trachypithecus francoisi (Francois' leaf monkey).